Reading from the N-terminus, the 545-residue chain is Zinc finger protein with KRAB and SCAN domains 4 (545 aa).

Residues 1–22 are disordered; it reads MAREPRKNAALDAQSAEDQTGL. Glycyl lysine isopeptide (Lys-Gly) (interchain with G-Cter in SUMO2) cross-links involve residues K26 and K29. A disordered region spans residues 34–55; that stretch reads ALTAEVRAPCSPARGPERSRQR. The SCAN box domain occupies 53–135; the sequence is RQRFRGFRYP…VLLEYLERQL (83 aa). Glycyl lysine isopeptide (Lys-Gly) (interchain with G-Cter in SUMO2) cross-links involve residues K178 and K222. Residues 221-317 form the KRAB domain; that stretch reads LKMEDVALTL…QRKQKNAIGS (97 aa). C2H2-type zinc fingers lie at residues 320–342, 348–370, 376–398, 404–426, and 432–454; these read HYCH…RRIH, YECE…QRVH, YECE…QRTH, YECD…HKIH, and YQCN…QRIH. The segment covering 455-467 has biased composition (basic and acidic residues); the sequence is GDKNVQNPEHGES. The segment at 455–480 is disordered; that stretch reads GDKNVQNPEHGESWESQGRTESQWEN. Positions 468 to 480 are enriched in polar residues; that stretch reads WESQGRTESQWEN. C2H2-type zinc fingers lie at residues 487 to 509 and 515 to 537; these read YKCN…QKIH and YQCD…QRSH.

Belongs to the krueppel C2H2-type zinc-finger protein family. As to expression, expressed in adult heart, brain, placenta, lung and kidney, but not in adult liver and skeletal muscle. In 17-day old embryo, detected in liver, skeletal muscle, brain, heart and small intestine.

The protein localises to the nucleus. In terms of biological role, may be involved in the transcriptional activation of MDM2 and EP300 genes. The sequence is that of Zinc finger protein with KRAB and SCAN domains 4 (ZKSCAN4) from Homo sapiens (Human).